The following is a 187-amino-acid chain: Threonylcarbamoyl-AMP synthase (187 aa).

Positions 4 to 187 (TLTLSEAVTA…DARSGHILRL (184 aa)) constitute a YrdC-like domain.

It belongs to the SUA5 family. TsaC subfamily.

It is found in the cytoplasm. The enzyme catalyses L-threonine + hydrogencarbonate + ATP = L-threonylcarbamoyladenylate + diphosphate + H2O. In terms of biological role, required for the formation of a threonylcarbamoyl group on adenosine at position 37 (t(6)A37) in tRNAs that read codons beginning with adenine. Catalyzes the conversion of L-threonine, HCO(3)(-)/CO(2) and ATP to give threonylcarbamoyl-AMP (TC-AMP) as the acyladenylate intermediate, with the release of diphosphate. The protein is Threonylcarbamoyl-AMP synthase of Xylella fastidiosa (strain 9a5c).